Reading from the N-terminus, the 181-residue chain is Aminoglycoside 2'-N-acetyltransferase (181 aa).

Positions 11–162 (VHTADLDSET…DGTVFVLPID (152 aa)) constitute an N-acetyltransferase domain. Substrate-binding positions include Asp35 and 82–83 (EG). CoA-binding positions include 84 to 86 (VAV) and 91 to 96 (RGQRLV). Residues Ser117 and 151-152 (DD) contribute to the substrate site.

This sequence belongs to the AAC(2')-I acetyltransferase family. In terms of assembly, homodimer.

Catalyzes the coenzyme A-dependent acetylation of the 2' hydroxyl or amino group of a broad spectrum of aminoglycosides. It confers resistance to aminoglycosides. In Mycobacterium bovis (strain ATCC BAA-935 / AF2122/97), this protein is Aminoglycoside 2'-N-acetyltransferase (aac).